We begin with the raw amino-acid sequence, 237 residues long: Uridylate kinase (237 aa).

Residue 10–13 participates in ATP binding; it reads KLSG. Gly51 contributes to the UMP binding site. Positions 52 and 56 each coordinate ATP. Residues Asp71 and 133–140 each bind UMP; that span reads TGNPCFTT. The ATP site is built by Thr160, Tyr166, and Asp169.

It belongs to the UMP kinase family. Homohexamer.

The protein resides in the cytoplasm. It catalyses the reaction UMP + ATP = UDP + ADP. The protein operates within pyrimidine metabolism; CTP biosynthesis via de novo pathway; UDP from UMP (UMPK route): step 1/1. Inhibited by UTP. In terms of biological role, catalyzes the reversible phosphorylation of UMP to UDP. The sequence is that of Uridylate kinase from Vesicomyosocius okutanii subsp. Calyptogena okutanii (strain HA).